Reading from the N-terminus, the 1177-residue chain is Transcription-repair-coupling factor (1177 aa).

Residues 638–799 (DMERERPMDR…MLGVRDLSVI (162 aa)) form the Helicase ATP-binding domain. ATP is bound at residue 651–658 (GDVGYGKT). The DEEQ box motif lies at 752-755 (DEEQ). The 155-residue stretch at 820 to 974 (LVREAIEREL…GFKIAMRDLT (155 aa)) folds into the Helicase C-terminal domain.

The protein in the N-terminal section; belongs to the UvrB family. It in the C-terminal section; belongs to the helicase family. RecG subfamily.

It localises to the cytoplasm. Functionally, couples transcription and DNA repair by recognizing RNA polymerase (RNAP) stalled at DNA lesions. Mediates ATP-dependent release of RNAP and its truncated transcript from the DNA, and recruitment of nucleotide excision repair machinery to the damaged site. Probably required to repair non-bulky DNA lesions. The polypeptide is Transcription-repair-coupling factor (Bacillus subtilis (strain 168)).